The chain runs to 538 residues: Poly [ADP-ribose] polymerase 2 (538 aa).

The WGR domain maps to 1-94; it reads MSIINDENGR…RDDEPVPNKY (94 aa). The segment at 104-133 is disordered; that stretch reads RQTEKEVKKEEPEPEPKVDEKNTRGRKKRG. The segment covering 105–126 has biased composition (basic and acidic residues); sequence QTEKEVKKEEPEPEPKVDEKNT. Positions 148–285 constitute a PARP alpha-helical domain; sequence VEEVNEKLKE…GSIEASLELK (138 aa). The 227-residue stretch at 309 to 535 folds into the PARP catalytic domain; that stretch reads EPVSEEIAGK…VKVDRLTAKE (227 aa). Residues 357–381 form a disordered region; it reads QEVPKKRGRKSTKTAAPTVPPPTTK.

The protein belongs to the ARTD/PARP family.

It is found in the nucleus. It catalyses the reaction NAD(+) + (ADP-D-ribosyl)n-acceptor = nicotinamide + (ADP-D-ribosyl)n+1-acceptor + H(+).. It carries out the reaction L-aspartyl-[protein] + NAD(+) = 4-O-(ADP-D-ribosyl)-L-aspartyl-[protein] + nicotinamide. The catalysed reaction is L-glutamyl-[protein] + NAD(+) = 5-O-(ADP-D-ribosyl)-L-glutamyl-[protein] + nicotinamide. With respect to regulation, inhibited by N-(6-oxo-5,6-dihydrophenanthridin-2-yl)-N,N-dimethylacetamide HCl (PJ34), 1,5-dihydroxyisoquinoline (DHQ) and 3-aminobenzamide (3AB). Its function is as follows. Poly[ADP-ribose] polymerase modifies various nuclear proteins by poly(ADP-ribosyl)ation, a post-translational modification synthesized after DNA damage that appears as an obligatory step in a detection/signaling pathway leading to the reparation of DNA strand breaks and programmed cell death. The polypeptide is Poly [ADP-ribose] polymerase 2 (Caenorhabditis elegans).